The following is a 104-amino-acid chain: Large ribosomal subunit protein uL24 (104 aa).

Belongs to the universal ribosomal protein uL24 family. Part of the 50S ribosomal subunit.

In terms of biological role, one of two assembly initiator proteins, it binds directly to the 5'-end of the 23S rRNA, where it nucleates assembly of the 50S subunit. One of the proteins that surrounds the polypeptide exit tunnel on the outside of the subunit. The sequence is that of Large ribosomal subunit protein uL24 from Bartonella bacilliformis (strain ATCC 35685 / KC583 / Herrer 020/F12,63).